Consider the following 834-residue polypeptide: ATP-dependent 6-phosphofructokinase (834 aa).

Positions 1–426 (MTTTSKIIND…FYEIFIACSN (426 aa)) are N-terminal catalytic PFK domain 1. ATP contacts are provided by residues Gly-62, 123-124 (RS), and 153-156 (GDGS). Asp-154 serves as a coordination point for Mg(2+). Residues 199-201 (SID), Arg-236, 243-245 (MGR), Glu-299, Arg-326, and 332-335 (HVQR) contribute to the substrate site. The active-site Proton acceptor is the Asp-201. Residues 427–437 (LHRRKVESKGM) form an interdomain linker region. The segment at 438–834 (GVLILHSGGP…DPNVNPQFTL (397 aa)) is C-terminal regulatory PFK domain 2. Beta-D-fructose 2,6-bisphosphate-binding positions include Arg-507, 566–570 (TIANN), Arg-603, 610–612 (MGA), Glu-666, Arg-692, 698–701 (HLQQ), and Arg-764. A disordered region spans residues 799 to 834 (SNLSEQDRPIKKSDISSPTSYSQKTFDPNVNPQFTL). Residues 803–812 (EQDRPIKKSD) are compositionally biased toward basic and acidic residues. The span at 813–834 (ISSPTSYSQKTFDPNVNPQFTL) shows a compositional bias: polar residues.

The protein belongs to the phosphofructokinase type A (PFKA) family. ATP-dependent PFK group I subfamily. Eukaryotic two domain clade 'E' sub-subfamily. In terms of assembly, homotetramer. Mg(2+) serves as cofactor. The N-terminus is blocked.

The protein resides in the cytoplasm. It carries out the reaction beta-D-fructose 6-phosphate + ATP = beta-D-fructose 1,6-bisphosphate + ADP + H(+). It participates in carbohydrate degradation; glycolysis; D-glyceraldehyde 3-phosphate and glycerone phosphate from D-glucose: step 3/4. With respect to regulation, allosterically activated by ADP, AMP, or fructose 2,6-bisphosphate, and allosterically inhibited by ATP or citrate. Its function is as follows. Catalyzes the phosphorylation of D-fructose 6-phosphate to fructose 1,6-bisphosphate by ATP, the first committing step of glycolysis. The polypeptide is ATP-dependent 6-phosphofructokinase (pfkA) (Dictyostelium discoideum (Social amoeba)).